A 70-amino-acid chain; its full sequence is Protein FlmC (70 aa).

Functionally, component of a type I toxin-antitoxin (TA) system. Either this protein or sequences upstream of it are required for translation of downstream flmA; this could be translationally coupled to flmA. The sequence is that of Protein FlmC (flmC) from Escherichia coli (strain K12).